Consider the following 355-residue polypeptide: UDP-N-acetylglucosamine--N-acetylmuramyl-(pentapeptide) pyrophosphoryl-undecaprenol N-acetylglucosamine transferase (355 aa).

Residues 15 to 17 (TGG), N127, R163, S191, I244, 263 to 268 (ALTVSE), and Q288 each bind UDP-N-acetyl-alpha-D-glucosamine.

It belongs to the glycosyltransferase 28 family. MurG subfamily.

Its subcellular location is the cell inner membrane. It catalyses the reaction di-trans,octa-cis-undecaprenyl diphospho-N-acetyl-alpha-D-muramoyl-L-alanyl-D-glutamyl-meso-2,6-diaminopimeloyl-D-alanyl-D-alanine + UDP-N-acetyl-alpha-D-glucosamine = di-trans,octa-cis-undecaprenyl diphospho-[N-acetyl-alpha-D-glucosaminyl-(1-&gt;4)]-N-acetyl-alpha-D-muramoyl-L-alanyl-D-glutamyl-meso-2,6-diaminopimeloyl-D-alanyl-D-alanine + UDP + H(+). It participates in cell wall biogenesis; peptidoglycan biosynthesis. Its function is as follows. Cell wall formation. Catalyzes the transfer of a GlcNAc subunit on undecaprenyl-pyrophosphoryl-MurNAc-pentapeptide (lipid intermediate I) to form undecaprenyl-pyrophosphoryl-MurNAc-(pentapeptide)GlcNAc (lipid intermediate II). In Cronobacter sakazakii (strain ATCC BAA-894) (Enterobacter sakazakii), this protein is UDP-N-acetylglucosamine--N-acetylmuramyl-(pentapeptide) pyrophosphoryl-undecaprenol N-acetylglucosamine transferase.